The sequence spans 370 residues: Phospho-N-acetylmuramoyl-pentapeptide-transferase (370 aa).

Transmembrane regions (helical) follow at residues 29-49 (AGLT…SFLL), 70-90 (GTPT…TLLW), 93-113 (LSNW…GLGF), 133-153 (KFIV…YYTG), 177-197 (GPVW…LIGS), 209-229 (GLAS…AYVS), 251-271 (VFLA…CHPA), 273-293 (VFMG…VAIM), 298-318 (ILLV…ILQV), and 349-369 (VIRF…TLKI).

The protein belongs to the glycosyltransferase 4 family. MraY subfamily. It depends on Mg(2+) as a cofactor.

Its subcellular location is the cell inner membrane. The catalysed reaction is UDP-N-acetyl-alpha-D-muramoyl-L-alanyl-gamma-D-glutamyl-meso-2,6-diaminopimeloyl-D-alanyl-D-alanine + di-trans,octa-cis-undecaprenyl phosphate = di-trans,octa-cis-undecaprenyl diphospho-N-acetyl-alpha-D-muramoyl-L-alanyl-D-glutamyl-meso-2,6-diaminopimeloyl-D-alanyl-D-alanine + UMP. The protein operates within cell wall biogenesis; peptidoglycan biosynthesis. Its function is as follows. Catalyzes the initial step of the lipid cycle reactions in the biosynthesis of the cell wall peptidoglycan: transfers peptidoglycan precursor phospho-MurNAc-pentapeptide from UDP-MurNAc-pentapeptide onto the lipid carrier undecaprenyl phosphate, yielding undecaprenyl-pyrophosphoryl-MurNAc-pentapeptide, known as lipid I. This Leptospira biflexa serovar Patoc (strain Patoc 1 / Ames) protein is Phospho-N-acetylmuramoyl-pentapeptide-transferase.